A 191-amino-acid polypeptide reads, in one-letter code: Ribonuclease M5 1 (191 aa).

In terms of domain architecture, Toprim spans 10-93; sequence KEVIVVEGKD…AFLTKHDAAP (84 aa). Mg(2+) contacts are provided by Glu16, Asp62, and Asp64.

The protein belongs to the ribonuclease M5 family. Mg(2+) serves as cofactor.

Its subcellular location is the cytoplasm. It catalyses the reaction Endonucleolytic cleavage of RNA, removing 21 and 42 nucleotides, respectively, from the 5'- and 3'-termini of a 5S-rRNA precursor.. Its function is as follows. Required for correct processing of both the 5' and 3' ends of 5S rRNA precursor. Cleaves both sides of a double-stranded region yielding mature 5S rRNA in one step. In Ligilactobacillus salivarius (strain CECT 5713) (Lactobacillus salivarius), this protein is Ribonuclease M5 1.